The following is a 112-amino-acid chain: UPF0212 protein Mboo_1659 (112 aa).

Belongs to the UPF0212 family.

The protein is UPF0212 protein Mboo_1659 of Methanoregula boonei (strain DSM 21154 / JCM 14090 / 6A8).